Reading from the N-terminus, the 99-residue chain is DNA-directed RNA polymerase subunit omega (99 aa).

Belongs to the RNA polymerase subunit omega family. The RNAP catalytic core consists of 2 alpha, 1 beta, 1 beta' and 1 omega subunit. When a sigma factor is associated with the core the holoenzyme is formed, which can initiate transcription.

It carries out the reaction RNA(n) + a ribonucleoside 5'-triphosphate = RNA(n+1) + diphosphate. Functionally, promotes RNA polymerase assembly. Latches the N- and C-terminal regions of the beta' subunit thereby facilitating its interaction with the beta and alpha subunits. This chain is DNA-directed RNA polymerase subunit omega, found in Xanthomonas oryzae pv. oryzae (strain MAFF 311018).